The sequence spans 214 residues: Thymidylate kinase (214 aa).

7-14 provides a ligand contact to ATP; the sequence is GIDGAGKS.

This sequence belongs to the thymidylate kinase family.

It catalyses the reaction dTMP + ATP = dTDP + ADP. Its function is as follows. Phosphorylation of dTMP to form dTDP in both de novo and salvage pathways of dTTP synthesis. The sequence is that of Thymidylate kinase from Chlorobium luteolum (strain DSM 273 / BCRC 81028 / 2530) (Pelodictyon luteolum).